Reading from the N-terminus, the 395-residue chain is Putative phosphatidate cytidylyltransferase (395 aa).

Transmembrane regions (helical) follow at residues 13 to 33 (STVF…SAFA), 78 to 98 (FAFG…MNWE), 115 to 135 (SLLS…VIYF), 144 to 164 (WIWT…YMIS), 177 to 197 (IYSL…YFSV), 201 to 221 (WTTI…AYLF), 242 to 262 (AFFG…LYSI), 306 to 326 (FYIY…IFAI), and 358 to 378 (FDSS…AGIS).

It belongs to the CDS family.

The protein localises to the cell membrane. It carries out the reaction a 1,2-diacyl-sn-glycero-3-phosphate + CTP + H(+) = a CDP-1,2-diacyl-sn-glycerol + diphosphate. It participates in phospholipid metabolism; CDP-diacylglycerol biosynthesis; CDP-diacylglycerol from sn-glycerol 3-phosphate: step 3/3. This is Putative phosphatidate cytidylyltransferase (cdsA) from Mycoplasma pneumoniae (strain ATCC 29342 / M129 / Subtype 1) (Mycoplasmoides pneumoniae).